We begin with the raw amino-acid sequence, 207 residues long: Small ribosomal subunit protein uS4 (207 aa).

An S4 RNA-binding domain is found at 97 to 165; the sequence is SRLDNLVFRM…VKLALESKAV (69 aa).

It belongs to the universal ribosomal protein uS4 family. As to quaternary structure, part of the 30S ribosomal subunit. Contacts protein S5. The interaction surface between S4 and S5 is involved in control of translational fidelity.

One of the primary rRNA binding proteins, it binds directly to 16S rRNA where it nucleates assembly of the body of the 30S subunit. Its function is as follows. With S5 and S12 plays an important role in translational accuracy. In Mycoplasmoides gallisepticum (strain R(low / passage 15 / clone 2)) (Mycoplasma gallisepticum), this protein is Small ribosomal subunit protein uS4.